A 197-amino-acid polypeptide reads, in one-letter code: Glycerol-3-phosphate acyltransferase (197 aa).

Transmembrane regions (helical) follow at residues 5-25 (IYIA…GLIL), 54-74 (GLAA…VIIA), 80-100 (AEAA…PVWL), 112-132 (IGVL…LWLA), and 153-173 (IFLW…LTLL).

This sequence belongs to the PlsY family. In terms of assembly, probably interacts with PlsX.

The protein localises to the cell inner membrane. It catalyses the reaction an acyl phosphate + sn-glycerol 3-phosphate = a 1-acyl-sn-glycero-3-phosphate + phosphate. It functions in the pathway lipid metabolism; phospholipid metabolism. In terms of biological role, catalyzes the transfer of an acyl group from acyl-phosphate (acyl-PO(4)) to glycerol-3-phosphate (G3P) to form lysophosphatidic acid (LPA). This enzyme utilizes acyl-phosphate as fatty acyl donor, but not acyl-CoA or acyl-ACP. The sequence is that of Glycerol-3-phosphate acyltransferase from Rhodopseudomonas palustris (strain HaA2).